The primary structure comprises 570 residues: Rho GTPase-activating protein gacEE (570 aa).

The 107-residue stretch at 127-233 (NSDISGVLLK…WVTTINNCID (107 aa)) folds into the PH domain. The C2 domain occupies 224-343 (WVTTINNCID…PNGSEISLWL (120 aa)). Asp-260, Asp-266, Asp-312, Asp-314, and Asp-320 together coordinate Ca(2+). A Rho-GAP domain is found at 381–567 (NSLEAIVKNR…FVFENSQQIL (187 aa)).

It depends on Ca(2+) as a cofactor.

The protein resides in the cytoplasm. Its function is as follows. Rho GTPase-activating protein involved in the signal transduction pathway. The polypeptide is Rho GTPase-activating protein gacEE (gacEE) (Dictyostelium discoideum (Social amoeba)).